A 460-amino-acid chain; its full sequence is Argininosuccinate lyase (460 aa).

It belongs to the lyase 1 family. Argininosuccinate lyase subfamily.

It is found in the cytoplasm. It catalyses the reaction 2-(N(omega)-L-arginino)succinate = fumarate + L-arginine. Its pathway is amino-acid biosynthesis; L-arginine biosynthesis; L-arginine from L-ornithine and carbamoyl phosphate: step 3/3. The protein is Argininosuccinate lyase of Mannheimia succiniciproducens (strain KCTC 0769BP / MBEL55E).